Consider the following 60-residue polypeptide: Potassium channel toxin ImKTx88 (60 aa).

The N-terminal stretch at 1–22 is a signal peptide; that stretch reads MSNFSVFLIALLFCSVFILSEA. Disulfide bonds link C30–C51, C36–C56, and C40–C58.

Belongs to the short scorpion toxin superfamily. Potassium channel inhibitor family. In terms of tissue distribution, expressed by the venom gland.

It localises to the secreted. In terms of biological role, recombinant toxin selectively inhibits Kv1.3/KCNA3 potassium channels with an IC(50) of 91 pM. The polypeptide is Potassium channel toxin ImKTx88 (Isometrus maculatus (Lesser brown scorpion)).